The following is a 130-amino-acid chain: Odontogenesis associated phosphoprotein (130 aa).

Residues 1–23 (MARRHCFSYWLLVCWLVVTVAEG) form the signal peptide.

Highly expressed in placenta.

The protein localises to the secreted. May promote nucleation of hydroxyapatite. In Homo sapiens (Human), this protein is Odontogenesis associated phosphoprotein.